The following is a 380-amino-acid chain: Queuine tRNA-ribosyltransferase (380 aa).

Aspartate 96 functions as the Proton acceptor in the catalytic mechanism. Substrate is bound by residues 96 to 100 (DSGGF), aspartate 150, glutamine 193, and glycine 220. The RNA binding stretch occupies residues 251–257 (GVGAPDS). Aspartate 270 functions as the Nucleophile in the catalytic mechanism. Residues 275–279 (TRIAR) are RNA binding; important for wobble base 34 recognition. Positions 308, 310, 313, and 339 each coordinate Zn(2+).

The protein belongs to the queuine tRNA-ribosyltransferase family. As to quaternary structure, homodimer. Within each dimer, one monomer is responsible for RNA recognition and catalysis, while the other monomer binds to the replacement base PreQ1. Zn(2+) serves as cofactor.

The enzyme catalyses 7-aminomethyl-7-carbaguanine + guanosine(34) in tRNA = 7-aminomethyl-7-carbaguanosine(34) in tRNA + guanine. It functions in the pathway tRNA modification; tRNA-queuosine biosynthesis. In terms of biological role, catalyzes the base-exchange of a guanine (G) residue with the queuine precursor 7-aminomethyl-7-deazaguanine (PreQ1) at position 34 (anticodon wobble position) in tRNAs with GU(N) anticodons (tRNA-Asp, -Asn, -His and -Tyr). Catalysis occurs through a double-displacement mechanism. The nucleophile active site attacks the C1' of nucleotide 34 to detach the guanine base from the RNA, forming a covalent enzyme-RNA intermediate. The proton acceptor active site deprotonates the incoming PreQ1, allowing a nucleophilic attack on the C1' of the ribose to form the product. After dissociation, two additional enzymatic reactions on the tRNA convert PreQ1 to queuine (Q), resulting in the hypermodified nucleoside queuosine (7-(((4,5-cis-dihydroxy-2-cyclopenten-1-yl)amino)methyl)-7-deazaguanosine). In Streptococcus agalactiae serotype Ia (strain ATCC 27591 / A909 / CDC SS700), this protein is Queuine tRNA-ribosyltransferase.